The following is a 513-amino-acid chain: Probable DNA ligase (513 aa).

Residue E213 participates in ATP binding. The active-site N6-AMP-lysine intermediate is the K215. Residues R220, R235, E264, F304, R376, and K382 each coordinate ATP.

It belongs to the ATP-dependent DNA ligase family. It depends on Mg(2+) as a cofactor.

The catalysed reaction is ATP + (deoxyribonucleotide)n-3'-hydroxyl + 5'-phospho-(deoxyribonucleotide)m = (deoxyribonucleotide)n+m + AMP + diphosphate.. Its function is as follows. DNA ligase that seals nicks in double-stranded DNA during DNA replication, DNA recombination and DNA repair. The protein is Probable DNA ligase of Anaeromyxobacter dehalogenans (strain 2CP-1 / ATCC BAA-258).